Here is a 117-residue protein sequence, read N- to C-terminus: Ribonuclease P protein component (117 aa).

Belongs to the RnpA family. Consists of a catalytic RNA component (M1 or rnpB) and a protein subunit.

It carries out the reaction Endonucleolytic cleavage of RNA, removing 5'-extranucleotides from tRNA precursor.. Its function is as follows. RNaseP catalyzes the removal of the 5'-leader sequence from pre-tRNA to produce the mature 5'-terminus. It can also cleave other RNA substrates such as 4.5S RNA. The protein component plays an auxiliary but essential role in vivo by binding to the 5'-leader sequence and broadening the substrate specificity of the ribozyme. The polypeptide is Ribonuclease P protein component (Staphylococcus aureus (strain bovine RF122 / ET3-1)).